The sequence spans 92 residues: Small ribosomal subunit protein uS19c (92 aa).

It belongs to the universal ribosomal protein uS19 family.

It is found in the plastid. It localises to the chloroplast. In terms of biological role, protein S19 forms a complex with S13 that binds strongly to the 16S ribosomal RNA. The chain is Small ribosomal subunit protein uS19c from Chlorokybus atmophyticus (Soil alga).